The primary structure comprises 305 residues: Succinate--CoA ligase [ADP-forming] subunit alpha (305 aa).

Residues 17–20 (TGKE), lysine 43, and 96–98 (ITE) contribute to the CoA site. Tyrosine 161 lines the substrate pocket. Histidine 249 functions as the Tele-phosphohistidine intermediate in the catalytic mechanism.

It belongs to the succinate/malate CoA ligase alpha subunit family. As to quaternary structure, heterotetramer of two alpha and two beta subunits.

The enzyme catalyses succinate + ATP + CoA = succinyl-CoA + ADP + phosphate. The catalysed reaction is GTP + succinate + CoA = succinyl-CoA + GDP + phosphate. The protein operates within carbohydrate metabolism; tricarboxylic acid cycle; succinate from succinyl-CoA (ligase route): step 1/1. Succinyl-CoA synthetase functions in the citric acid cycle (TCA), coupling the hydrolysis of succinyl-CoA to the synthesis of either ATP or GTP and thus represents the only step of substrate-level phosphorylation in the TCA. The alpha subunit of the enzyme binds the substrates coenzyme A and phosphate, while succinate binding and nucleotide specificity is provided by the beta subunit. This chain is Succinate--CoA ligase [ADP-forming] subunit alpha, found in Aquifex aeolicus (strain VF5).